Reading from the N-terminus, the 934-residue chain is Oxysterol-binding protein-related protein 6 (934 aa).

The segment at 1–62 is disordered; sequence MSSDEKGISP…RQLLEPEPVP (62 aa). Ser-2 carries the post-translational modification N-acetylserine. Residues 14 to 29 are compositionally biased toward low complexity; the sequence is TSTPTHRSASSSTSSQ. A compositionally biased stretch (basic and acidic residues) spans 30 to 40; that stretch reads RDSRQSIHILE. Residue Ser-35 is modified to Phosphoserine. Residues 42 to 53 show a composition bias toward polar residues; it reads TASSSTEPSVSR. The PH domain occupies 86-181; the sequence is PDKHEGFMLK…WVSKLRHHRL (96 aa). 2 positions are modified to phosphoserine: Ser-190 and Ser-290.

Belongs to the OSBP family. As to quaternary structure, homodimer. Interacts with OSBPL3. As to expression, expressed in brain and striated muscle (at protein level). Widely expressed. Expressed in skeletal muscle.

The protein resides in the cytoplasm. It is found in the cytosol. It localises to the endoplasmic reticulum membrane. The protein localises to the nucleus envelope. Its subcellular location is the cell membrane. The protein resides in the endosome membrane. In terms of biological role, regulates cellular transport and efflux of cholesterol. Plays a role in phosphatidylinositol-4-phophate (PI4P) turnover at the neuronal membrane. Binds via its PH domain PI4P, phosphatidylinositol-4,5-diphosphate, phosphatidylinositol-3,4,5-triphosphate, and phosphatidic acid. Weakly binds 25-hydroxycholesterol. In Homo sapiens (Human), this protein is Oxysterol-binding protein-related protein 6 (OSBPL6).